A 515-amino-acid polypeptide reads, in one-letter code: uncharacterized protein (515 aa).

Disordered stretches follow at residues 117 to 188 (DNIL…RKSQ), 362 to 453 (RSTS…AESM), and 496 to 515 (GNAVQEADTESMDDFMDYFN). 3 stretches are compositionally biased toward basic and acidic residues: residues 370-380 (KNVESETKQEE), 388-402 (PAEDETPPMKEEVIE), and 428-438 (PIKEIEDKVEP). Positions 502 to 515 (ADTESMDDFMDYFN) are enriched in acidic residues.

This is an uncharacterized protein from Ostreid herpesvirus 1 (isolate France) (OsHV-1).